The following is a 298-amino-acid chain: Apolipoprotein E (298 aa).

Positions M1 to A18 are cleaved as a signal peptide. A run of 6 repeats spans residues L74 to G95, P96 to A117, G118 to G139, Q140 to Q161, R162 to E183, and G223 to E244. The interval L74–E244 is 8 X 22 AA approximate tandem repeats. The residue at position 137 (M137) is a Methionine sulfoxide. S141 carries the phosphoserine modification. Residues H152 to R162 form an LDL and other lipoprotein receptors binding region. L156–R159 is a binding site for heparin. The interval A204–L272 is lipid-binding and lipoprotein association. Residue G218 to L225 coordinates heparin. The specificity for association with VLDL stretch occupies residues R260–L272.

Belongs to the apolipoprotein A1/A4/E family. In terms of assembly, homotetramer. May interact with ABCA1; functionally associated with ABCA1 in the biogenesis of HDLs. May interact with APP/A4 amyloid-beta peptide; the interaction is extremely stable in vitro but its physiological significance is unclear. May interact with MAPT. May interact with MAP2. In the cerebrospinal fluid, interacts with secreted SORL1. Interacts with PMEL; this allows the loading of PMEL luminal fragment on ILVs to induce fibril nucleation. Post-translationally, APOE exists as multiple glycosylated and sialylated glycoforms within cells and in plasma. The extent of glycosylation and sialylation are tissue and context specific. Glycated in plasma VLDL. In terms of processing, phosphorylated by FAM20C in the extracellular medium.

It localises to the secreted. It is found in the extracellular space. The protein localises to the extracellular matrix. The protein resides in the extracellular vesicle. Its subcellular location is the endosome. It localises to the multivesicular body. Functionally, APOE is an apolipoprotein, a protein associating with lipid particles, that mainly functions in lipoprotein-mediated lipid transport between organs via the plasma and interstitial fluids. APOE is a core component of plasma lipoproteins and is involved in their production, conversion and clearance. Apolipoproteins are amphipathic molecules that interact both with lipids of the lipoprotein particle core and the aqueous environment of the plasma. As such, APOE associates with chylomicrons, chylomicron remnants, very low density lipoproteins (VLDL) and intermediate density lipoproteins (IDL) but shows a preferential binding to high-density lipoproteins (HDL). It also binds a wide range of cellular receptors including the LDL receptor/LDLR, the LDL receptor-related proteins LRP1, LRP2 and LRP8 and the very low-density lipoprotein receptor/VLDLR that mediate the cellular uptake of the APOE-containing lipoprotein particles. Finally, APOE also has a heparin-binding activity and binds heparan-sulfate proteoglycans on the surface of cells, a property that supports the capture and the receptor-mediated uptake of APOE-containing lipoproteins by cells. A main function of APOE is to mediate lipoprotein clearance through the uptake of chylomicrons, VLDLs, and HDLs by hepatocytes. APOE is also involved in the biosynthesis by the liver of VLDLs as well as their uptake by peripheral tissues ensuring the delivery of triglycerides and energy storage in muscle, heart and adipose tissues. By participating in the lipoprotein-mediated distribution of lipids among tissues, APOE plays a critical role in plasma and tissues lipid homeostasis. APOE is also involved in two steps of reverse cholesterol transport, the HDLs-mediated transport of cholesterol from peripheral tissues to the liver, and thereby plays an important role in cholesterol homeostasis. First, it is functionally associated with ABCA1 in the biogenesis of HDLs in tissues. Second, it is enriched in circulating HDLs and mediates their uptake by hepatocytes. APOE also plays an important role in lipid transport in the central nervous system, regulating neuron survival and sprouting. The protein is Apolipoprotein E (APOE) of Hydrochoerus hydrochaeris (Capybara).